A 235-amino-acid polypeptide reads, in one-letter code: 15,16-dihydrobiliverdin:ferredoxin oxidoreductase (235 aa).

This sequence belongs to the HY2 family.

It carries out the reaction 15,16-dihydrobiliverdin + oxidized 2[4Fe-4S]-[ferredoxin] = biliverdin IXalpha + reduced 2[4Fe-4S]-[ferredoxin] + 2 H(+). In terms of biological role, catalyzes the two-electron reduction of biliverdin IX-alpha at the C15 methine bridge. In Parasynechococcus marenigrum (strain WH8102), this protein is 15,16-dihydrobiliverdin:ferredoxin oxidoreductase (pebA).